The following is a 252-amino-acid chain: CLAVATA3/ESR (CLE)-related protein 4A-1 (252 aa).

The signal sequence occupies residues 1–21 (MAKNAMLCLLILRVVLALAFA). The tract at residues 21–83 (ATNKKGDEEP…SNQLPNNNWM (63 aa)) is required for secretion from the host cytoplasm to the host apoplasm. A glycan (N-linked (GlcNAc...) asparagine) is linked at Asn-32. The interval 116–252 (RKTGMHSQRH…APAGPDPIHH (137 aa)) is disordered. 2 stretches are compositionally biased toward basic and acidic residues: residues 125–137 (HHEE…EKRV) and 144–242 (PIHH…EKRG). An A-1 repeat occupies 127 to 135 (EETTLEQEK). The interval 127-219 (EETTLEQEKR…HEETTLEQEK (93 aa)) is 6 X approximate repeat A. A CLE-1 repeat occupies 136-147 (RVAGAGPDPIHH). A 6 X approximate repeat CLE region spans residues 136 to 252 (RVAGAGPDPI…APAGPDPIHH (117 aa)). An A-2 repeat occupies 148 to 156 (QDTTLEQEK). One copy of the CLE-2 repeat lies at 157–168 (RAVPAGPDPKHH). One copy of the A-3 repeat lies at 169–177 (EETTLEQEK). One copy of the CLE-3 repeat lies at 178 to 189 (RAVPAGPDPKHH). An A-4 repeat occupies 190–198 (EETTLEQEK). Residues 199–210 (RAVPAGPDPKHH) form a CLE-4 repeat. The stretch at 211-219 (EETTLEQEK) is one A-5 repeat. Residues 220–231 (RAVPAGPDPKHH) form a CLE-5 repeat. The stretch at 232–240 (EETTFEQEK) is one A-6 repeat. The CLE-6 repeat unit spans residues 241-252 (RGAPAGPDPIHH).

Belongs to the CLV3/ESR signal peptide family. Highly expressed exclusively within the dorsal esophageal gland cell during syncytium formation in host plants.

It is found in the secreted. The protein localises to the host cytoplasm. Its subcellular location is the host extracellular space. It localises to the extracellular space. The protein resides in the apoplast. Functionally, mimics host plant CLE extracellular signal peptides that regulate cell fate. May play a role in the differentiation or division of feeding cells (syncytia) induced in plant roots during infection. The sequence is that of CLAVATA3/ESR (CLE)-related protein 4A-1 (CLE-4A-1) from Globodera rostochiensis (Golden nematode worm).